Reading from the N-terminus, the 311-residue chain is Fluoride export protein 1 (311 aa).

Over 1-6 (MLLTQS) the chain is Cytoplasmic. A helical transmembrane segment spans residues 7–25 (YFCIMSMLGTLARLGLTAL). Over 26–29 (NTYP) the chain is Extracellular. Residues 30 to 50 (GAPFSGLLWVQFVGCVIMGFC) traverse the membrane as a helical segment. Residues 51-65 (QTESVFFPRPKHNAT) are Cytoplasmic-facing. A helical membrane pass occupies residues 66–86 (FLLAITTGFCGSLTTFSSWML). The Extracellular portion of the chain corresponds to 87–106 (QMFTGMANLDPFERRGRGYS). Residues 107-127 (FLSVVSDFMVTMCIAMSSLIW) traverse the membrane as a helical segment. Residues 128–154 (GKQIGKTTGQWRIGKVAFAWPIPAHTH) lie on the Cytoplasmic side of the membrane. Residues 155–175 (IVVRVLLLLLSICFFVGAAFY) traverse the membrane as a helical segment. Over 176 to 186 (TAYTTNVTHRG) the chain is Extracellular. An N-linked (GlcNAc...) asparagine glycan is attached at N181. The helical transmembrane segment at 187–207 (IGFSLIFSPFAALTRLYLARF) threads the bilayer. The Cytoplasmic segment spans residues 208-212 (LNSPQ). A helical membrane pass occupies residues 213–233 (YFIPYGTLCANVFATLLLSIM). Topologically, residues 234–250 (YMIPQITHCTPVSRSVM) are extracellular. Residues 251–268 (YGIQNGFCAVLSTLSTFS) form a helical membrane-spanning segment. Residues 269 to 278 (NELHTMPIKR) are Cytoplasmic-facing. A helical transmembrane segment spans residues 279–299 (AYIYCIISVAISFSICVIVDG). The Extracellular segment spans residues 300 to 311 (ATAWGHGYTEKY).

It belongs to the fluoride channel Fluc/FEX (TC 1.A.43) family.

The protein localises to the cell membrane. It catalyses the reaction fluoride(in) = fluoride(out). In terms of biological role, fluoride channel required for the rapid expulsion of cytoplasmic fluoride. The protein is Fluoride export protein 1 (fex1) of Schizosaccharomyces pombe (strain 972 / ATCC 24843) (Fission yeast).